The following is a 1346-amino-acid chain: Toll-like receptor Tollo (1346 aa).

Positions 1–21 are cleaved as a signal peptide; that stretch reads MLATTHMLYVLIATCVIPIFG. Residues 22–1021 lie on the Extracellular side of the membrane; it reads AALSKTVLYQ…NQPPKLDYIP (1000 aa). Residues asparagine 63, asparagine 112, and asparagine 126 are each glycosylated (N-linked (GlcNAc...) asparagine). LRR repeat units lie at residues 97–120, 124–146, 151–174, 176–198, 209–232, 234–256, 257–280, 282–304, 306–330, 331–354, 355–378, 380–402, 404–426, 427–450, 452–473, 474–497, 498–521, 523–544, 546–568, 570–591, 593–614, 615–637, and 638–661; these read LVEL…SFRG, LRNL…MASN, FRQL…MVCP, KSLQ…YFSA, GSTL…MLSA, GRLT…AFEG, LLSL…LFAE, KQLQ…IFGE, AELL…TFVG, LKRL…IFRP, LASL…IFAD, TNLH…TLQG, KNLL…SLVN, CSQL…LAHV, LLKT…SITQ, LESL…VFDR, MSSL…SLQR, SQLQ…LFTE, PNLV…HIPI, LQWL…EIES, LSLS…SSIP, NSVE…TFFK, and KPNL…ALRL. N-linked (GlcNAc...) asparagine glycosylation is present at asparagine 182. Asparagine 291 carries N-linked (GlcNAc...) asparagine glycosylation. A glycan (N-linked (GlcNAc...) asparagine) is linked at asparagine 426. N-linked (GlcNAc...) asparagine glycosylation occurs at asparagine 468. N-linked (GlcNAc...) asparagine glycosylation occurs at asparagine 505. Asparagine 552 carries N-linked (GlcNAc...) asparagine glycosylation. A glycan (N-linked (GlcNAc...) asparagine) is linked at asparagine 640. Cystine bridges form between cysteine 682–cysteine 710, cysteine 684–cysteine 733, cysteine 757–cysteine 763, and cysteine 761–cysteine 776. LRR repeat units lie at residues 790–813, 814–837, 838–861, 863–885, 887–909, and 912–938; these read PMDS…AFIG, RKRL…TFYG, LLEL…EFQG, DNLQ…TFTH, YHLK…NFLP, and LNEL…YINR. Asparagine 823 and asparagine 832 each carry an N-linked (GlcNAc...) asparagine glycan. Cysteine 924 and cysteine 950 form a disulfide bridge. 2 N-linked (GlcNAc...) asparagine glycosylation sites follow: asparagine 956 and asparagine 1000. Residues 1022–1042 form a helical membrane-spanning segment; sequence ILVAILTAFIFVMICISLVFI. Over 1043 to 1346 the chain is Cytoplasmic; sequence FRQEMRVWCH…PTPASRNLHM (304 aa). One can recognise a TIR domain in the interval 1074–1209; sequence KLFDAFVSYS…LFWQKLRFAL (136 aa). Positions 1235–1346 are disordered; it reads HHHHHVHQQA…PTPASRNLHM (112 aa). Over residues 1267-1300 the composition is skewed to low complexity; that stretch reads PGSFRRQPSLHQQQQQQQQIRGNNNTTQQQQQQQ.

Belongs to the Toll-like receptor family. May interact (via the extracellular domain) with 18w (via the extracellular domain).

Its subcellular location is the cell membrane. It is found in the apical cell membrane. In terms of biological role, toll-related receptor. Probably specific to larval innate immunity. Involved in the tracheal immune response of larvae to Gram-negative and perhaps Gram-positive bacteria; upon infection it negatively regulates the immune deficiency (Imd) signaling cascade specifically in the respiratory epithelium to prevent the overexpression of antimicrobial peptides (AMP). Involved in the NF-kappa-B-dependent apoptosis of unfit cells during cell competition. Involved in neuron-specific glycosylation. Positively controls the neuromuscular junction (NMJ) growth in presynaptic motorneurons, probably via the JNK pathway. During development of the peripheral nervous system, may function in the NF-kappa-B (rel) regulatory cascade to repress expression of the neuron-specific genes sc and ase in non-neuronal cells. Promotes heterophilic cell adhesion with 18w in vitro. May have a minor role in leg development. May be involved in determining the proximal cell fate in the wing, possibly by negatively regulating the Dpp signaling pathway. May also be involved in the Dpp signaling pathway in the eye. Possibly functions with 18w and Toll-6 during convergent extension, to help direct proper planar cell polarity, cell intercalation and axis elongation. This Drosophila melanogaster (Fruit fly) protein is Toll-like receptor Tollo.